The chain runs to 197 residues: MSNVRVSNGSPSLERMDARQAEHPKPSACRNLFGPVNHEELTRDLEKHCRDMEEASQRKWNFDFQNHKPLEGRYEWQEVERGSLPEFYYRPPRPPKSACKVLAQESQDVSGSRQAVPLIGSQANSEDRHLVDQMPDSSDNPAGLAEQCPGMRKRPAAEDSSSQNKRANRTEENVSDGSPNAGTVEQTPKKPGLRRQT.

Residues 1 to 11 (MSNVRVSNGSP) show a composition bias toward polar residues. The interval 1-34 (MSNVRVSNGSPSLERMDARQAEHPKPSACRNLFG) is disordered. Position 10 is a phosphoserine; by UHMK1 (Ser10). Residues 14 to 25 (ERMDARQAEHPK) are compositionally biased toward basic and acidic residues. Positions 51-91 (DMEEASQRKWNFDFQNHKPLEGRYEWQEVERGSLPEFYYRP) are interaction with CDK2. A Phosphotyrosine; by SRC modification is found at Tyr74. Positions 86–197 (EFYYRPPRPP…PKKPGLRRQT (112 aa)) are disordered. Tyr88 is subject to Phosphotyrosine; by ABL, LYN, SRC and JAK2. The residue at position 89 (Tyr89) is a Phosphotyrosine. A compositionally biased stretch (polar residues) spans 104–113 (QESQDVSGSR). The Nuclear localization signal signature appears at 153 to 169 (KRPAAEDSSSQNKRANR). Position 170 is a phosphothreonine; by CaMK1 (Thr170). Over residues 175–186 (SDGSPNAGTVEQ) the composition is skewed to polar residues. Phosphothreonine; by PKB/AKT1, CDK1 and CDK2 is present on Thr187. A Phosphothreonine; by CaMK1, PKB/AKT1, RPS6KA1, RPS6KA3 and PIM1 modification is found at Thr197.

The protein belongs to the CDI family. In terms of assembly, forms a ternary complex composed of CCNE1, CDK2 and CDKN1B. Interacts directly with CCNE1; the interaction is inhibited by CDK2-dependent phosphorylation on Thr-187. Interacts with COPS5, subunit of the COP9 signalosome complex; the interaction leads to CDKN1B degradation. Interacts with NUP50; the interaction leads to nuclear import and degradation of phosphorylated CDKN1B. Interacts with CCND1 and SNX6. Interacts (Thr-197-phosphorylated form) with 14-3-3 proteins, binds strongly YWHAQ, weakly YWHAE and YWHAH, but not YWHAB nor YWHAZ; the interaction with YWHAQ results in translocation to the cytoplasm. Interacts with AKT1 and LYN; the interactions lead to cytoplasmic mislocation, phosphorylation of CDKN1B and inhibition of cell cycle arrest. Forms a ternary complex with CCNA2 and CDK2; CDKN1B inhibits the kinase activity of CDK2 through conformational rearrangements. Interacts (unphosphorylated form) with CDK2. Forms a complex with CDK2 and SPDYA, but does not directly interact with SPDYA. Forms a ternary complex composed of cyclin D, CDK4 and CDKN1B. Interacts (phosphorylated on Tyr-88 and Tyr-89) with CDK4; the interaction is required for cyclin D and CDK4 complex assembly, induces nuclear translocation and activates the CDK4 kinase activity. Interacts with GRB2. Interacts with PIM1. Identified in a complex with SKP1, SKP2 and CKS1B. Interacts with UHMK1; the interaction leads to cytoplasmic mislocation, phosphorylation of CDKN1B and inhibition of cell cycle arrest. Also interacts with CDK1. Dephosphorylated on Thr-187 by PPM1H, leading to CDKN1B stability. In terms of processing, phosphorylated; phosphorylation occurs on serine, threonine and tyrosine residues. Phosphorylation on Ser-10 is the major site of phosphorylation in resting cells, takes place at the G(0)-G(1) phase and leads to protein stability. Phosphorylation on other sites is greatly enhanced by mitogens, growth factors, MYC and in certain cancer cell lines. The phosphorylated form found in the cytoplasm is inactivate. Phosphorylation on Thr-197 is required for interaction with 14-3-3 proteins. Phosphorylation on Thr-187, by CDK1 and CDK2 leads to protein ubiquitination and proteasomal degradation. Tyrosine phosphorylation promotes this process. Phosphorylation by PKB/AKT1 can be suppressed by LY294002, an inhibitor of the catalytic subunit of PI3K. Phosphorylation on Tyr-88 and Tyr-89 has no effect on binding CDK2, but is required for binding CDK4. Dephosphorylated on tyrosine residues by G-CSF. Dephosphorylated on Thr-187 by PPM1H, leading to CDKN1B stability. Ubiquitinated; in the cytoplasm by the KPC complex (composed of RNF123/KPC1 and UBAC1/KPC2) and, in the nucleus, by SCF(SKP2). The latter requires prior phosphorylation on Thr-187. Ubiquitinated; by a TRIM21-containing SCF(SKP2)-like complex; leads to its degradation. Post-translationally, subject to degradation in the lysosome. Interaction with SNX6 promotes lysosomal degradation.

The protein resides in the nucleus. Its subcellular location is the cytoplasm. The protein localises to the endosome. Functionally, important regulator of cell cycle progression. Inhibits the kinase activity of CDK2 bound to cyclin A, but has little inhibitory activity on CDK2 bound to SPDYA. Involved in G1 arrest. Potent inhibitor of cyclin E- and cyclin A-CDK2 complexes. Forms a complex with cyclin type D-CDK4 complexes and is involved in the assembly, stability, and modulation of CCND1-CDK4 complex activation. Acts either as an inhibitor or an activator of cyclin type D-CDK4 complexes depending on its phosphorylation state and/or stoichometry. The protein is Cyclin-dependent kinase inhibitor 1B (Cdkn1b) of Mus musculus (Mouse).